A 399-amino-acid polypeptide reads, in one-letter code: Homeobox protein ceh-39 (399 aa).

2 disordered regions span residues P32–E91 and A158–S187. Residues S60–S79 are compositionally biased toward low complexity. A DNA-binding region (CUT) is located at residues N205–K291. The homeobox DNA-binding region spans S315–K374.

Belongs to the CUT homeobox family. Expressed in hermaphrodite gonads.

It localises to the nucleus. It is found in the chromosome. Functionally, transcriptional regulator which is involved in the sex determination and X chromosome dosage compensation pathways. Directly binds to 5'-ATTGAT-3' sites in the promoter of sex-determining factor xol-1 to negatively regulate its expression and promote hermaphrodite development. Associates with condensed DNA during mitosis. The sequence is that of Homeobox protein ceh-39 from Caenorhabditis elegans.